The sequence spans 258 residues: Acetylglutamate kinase (258 aa).

Substrate contacts are provided by residues 44 to 45, Arg66, and Asn158; that span reads GG. Residues 181 to 186 and 209 to 211 contribute to the ATP site; these read DVSGIL and IIT.

Belongs to the acetylglutamate kinase family. ArgB subfamily. Homodimer.

Its subcellular location is the cytoplasm. The catalysed reaction is N-acetyl-L-glutamate + ATP = N-acetyl-L-glutamyl 5-phosphate + ADP. It functions in the pathway amino-acid biosynthesis; L-arginine biosynthesis; N(2)-acetyl-L-ornithine from L-glutamate: step 2/4. Its function is as follows. Catalyzes the ATP-dependent phosphorylation of N-acetyl-L-glutamate. The sequence is that of Acetylglutamate kinase from Shigella flexneri.